The sequence spans 484 residues: tRNA sulfurtransferase (484 aa).

In terms of domain architecture, THUMP spans 56-158; it reads NCLKKALSKV…GNRAYFYTEV (103 aa). Residues 176–177, K257, G279, and Q288 contribute to the ATP site; that span reads LV. C336 and C444 are oxidised to a cystine. Residues 396–479 form the Rhodanese domain; it reads APEGAVIVDL…TRNAVPPSSQ (84 aa). The active-site Cysteine persulfide intermediate is C444.

The protein belongs to the ThiI family.

Its subcellular location is the cytoplasm. It catalyses the reaction [ThiI sulfur-carrier protein]-S-sulfanyl-L-cysteine + a uridine in tRNA + 2 reduced [2Fe-2S]-[ferredoxin] + ATP + H(+) = [ThiI sulfur-carrier protein]-L-cysteine + a 4-thiouridine in tRNA + 2 oxidized [2Fe-2S]-[ferredoxin] + AMP + diphosphate. The catalysed reaction is [ThiS sulfur-carrier protein]-C-terminal Gly-Gly-AMP + S-sulfanyl-L-cysteinyl-[cysteine desulfurase] + AH2 = [ThiS sulfur-carrier protein]-C-terminal-Gly-aminoethanethioate + L-cysteinyl-[cysteine desulfurase] + A + AMP + 2 H(+). It participates in cofactor biosynthesis; thiamine diphosphate biosynthesis. Catalyzes the ATP-dependent transfer of a sulfur to tRNA to produce 4-thiouridine in position 8 of tRNAs, which functions as a near-UV photosensor. Also catalyzes the transfer of sulfur to the sulfur carrier protein ThiS, forming ThiS-thiocarboxylate. This is a step in the synthesis of thiazole, in the thiamine biosynthesis pathway. The sulfur is donated as persulfide by IscS. In Pyrobaculum aerophilum (strain ATCC 51768 / DSM 7523 / JCM 9630 / CIP 104966 / NBRC 100827 / IM2), this protein is tRNA sulfurtransferase.